A 355-amino-acid polypeptide reads, in one-letter code: Alanine racemase (355 aa).

The active-site Proton acceptor; specific for D-alanine is lysine 34. Lysine 34 bears the N6-(pyridoxal phosphate)lysine mark. Residue arginine 133 coordinates substrate. Tyrosine 249 (proton acceptor; specific for L-alanine) is an active-site residue. Methionine 297 contributes to the substrate binding site.

It belongs to the alanine racemase family. It depends on pyridoxal 5'-phosphate as a cofactor.

It carries out the reaction L-alanine = D-alanine. It participates in amino-acid biosynthesis; D-alanine biosynthesis; D-alanine from L-alanine: step 1/1. Functionally, catalyzes the interconversion of L-alanine and D-alanine. May also act on other amino acids. The protein is Alanine racemase (alr) of Rickettsia peacockii (strain Rustic).